The chain runs to 558 residues: Solute carrier family 22 member 6-A (558 aa).

Over 1–15 the chain is Cytoplasmic; that stretch reads MSFAELLERTGGMGR. A helical membrane pass occupies residues 16–36; the sequence is FQITQVALMCFPILLMASHNL. Residues 37 to 140 lie on the Extracellular side of the membrane; that stretch reads LQNFSAAIPD…LVCGHKNRRQ (104 aa). The chain crosses the membrane as a helical span at residues 141–161; it reads LAQSVYMGGVLVGAIILGGLS. Residues 162 to 167 lie on the Cytoplasmic side of the membrane; sequence DRYGRR. A helical transmembrane segment spans residues 168–188; it reads ALLIWSYFQMAVSGLCSAFSP. Over 189 to 197 the chain is Extracellular; it reads NYLSYCIFR. A helical membrane pass occupies residues 198-218; it reads FLTGMALSGIGLNTTALIVEW. Topologically, residues 219 to 225 are cytoplasmic; the sequence is VPTRVRT. Residues 226-246 traverse the membrane as a helical segment; sequence ITGTLAGFSYTVGQLLLAGLA. Topologically, residues 247–253 are extracellular; the sequence is YAMRDWR. The chain crosses the membrane as a helical span at residues 254–274; sequence WLQLCVSLPFFIFFLYSWWFP. Residues 275–342 lie on the Cytoplasmic side of the membrane; sequence ESARWLVLSG…DLIRTSTIRR (68 aa). The helical transmembrane segment at 343-363 threads the bilayer; the sequence is ISCALSLVWFSTSFAYYGLAM. The Extracellular portion of the chain corresponds to 364-369; it reads DLQNFN. A helical membrane pass occupies residues 370–390; the sequence is VSIYLIQVIFGAVDFPAKIFS. Residues 391–400 are Cytoplasmic-facing; sequence TTAMIYVGRK. The helical transmembrane segment at 401-421 threads the bilayer; the sequence is FTQLMSLILGGVVILANSFVP. The Extracellular portion of the chain corresponds to 422–428; it reads HEMQTVR. The helical transmembrane segment at 429–449 threads the bilayer; it reads TGMAVFGKGCLAASFSCVFLY. At 450–462 the chain is on the cytoplasmic side; sequence TTELYPTVIRQSG. A helical membrane pass occupies residues 463–483; it reads LGLCSTMARIGGIVAPLVKIL. At 484–488 the chain is on the extracellular side; it reads GEYYP. Residues 489–509 form a helical membrane-spanning segment; it reads FLPLVIYGGAPIISGLCVFFL. Residues 510-558 are Cytoplasmic-facing; the sequence is PETVNKPLPDTIEEVEKRIKAPKKENEMNEIVSLKKKEGMKENPVNDVL. Residues 539–550 show a composition bias toward basic and acidic residues; the sequence is EIVSLKKKEGMK. Positions 539 to 558 are disordered; that stretch reads EIVSLKKKEGMKENPVNDVL.

It belongs to the major facilitator (TC 2.A.1) superfamily. Organic cation transporter (TC 2.A.1.19) family. In terms of processing, glycosylated. Glycosylation is necessary for proper targeting of the transporter to the plasma membrane.

Its subcellular location is the cell membrane. It localises to the basolateral cell membrane. It is found in the basal cell membrane. Involved in the renal elimination of endogenous and exogenous organic anions. Mediates the sodium-independent uptake of p-aminohippurate (PAH), 2,3-dimercapto-1-propanesulfonic acid (DMPS), cidofovir, adefovir, 9-(2-phosphonylmethoxyethyl) guanine (PMEG), 9-(2-phosphonylmethoxyethyl) diaminopurine (PMEDAP), ochratoxin (OTA), acyclovir (ACV), 3'-azido-3-'deoxythymidine (AZT), cimetidine (CMD), 2,4-dichloro-phenoxyacetate (2,4-D), hippurate (HA), indoleacetate (IA), indoxyl sulfate (IS) and 3-carboxy-4-methyl-5-propyl-2-furanpropionate (CMPF) and edaravone sulfate. PAH uptake is inhibited by p-chloromercuribenzenesulphonate (PCMBS), diethyl pyrocarbonate (DEPC), indomethacin, sulindac, diclofenac, carprofen, okadaic acid, benzothiazolylcysteine (BTC), S-chlorotrifluoroethylcysteine (CTFC), cysteine S-conjugates S-dichlorovinylcysteine (DCVC), furosemide, steviol, phorbol 12-myristate 13-acetate (PMA), calcium ionophore A23187, benzylpenicillin, bumetamide, losartan, probenecid, phenol red, urate, glutarate and alpha-ketoglutarate. This chain is Solute carrier family 22 member 6-A (slc22a6-a), found in Xenopus laevis (African clawed frog).